Here is a 311-residue protein sequence, read N- to C-terminus: Probable manganese-dependent inorganic pyrophosphatase (311 aa).

Mn(2+)-binding residues include His-9, Asp-13, Asp-15, Asp-77, His-99, and Asp-151.

Belongs to the PPase class C family. As to quaternary structure, homodimer. Mn(2+) serves as cofactor.

It is found in the cytoplasm. The enzyme catalyses diphosphate + H2O = 2 phosphate + H(+). The protein is Probable manganese-dependent inorganic pyrophosphatase (ppaC) of Streptococcus gordonii (strain Challis / ATCC 35105 / BCRC 15272 / CH1 / DL1 / V288).